Reading from the N-terminus, the 312-residue chain is Erlin (312 aa).

The Cytoplasmic segment spans residues 1–3; it reads MLT. The helical transmembrane segment at 4–24 threads the bilayer; that stretch reads ELALGLFALWIAIFSQALHKI. Residues 25-312 lie on the Lumenal side of the membrane; the sequence is EEGHVGVYYR…FVMGTTQQTV (288 aa). Asparagine 104 carries N-linked (GlcNAc...) asparagine glycosylation.

The protein belongs to the band 7/mec-2 family. As to quaternary structure, seems to form a multimeric complex. As to expression, expressed in the germline only.

The protein localises to the endoplasmic reticulum membrane. The sequence is that of Erlin from Caenorhabditis elegans.